The sequence spans 128 residues: Large ribosomal subunit protein bL17 (128 aa).

This sequence belongs to the bacterial ribosomal protein bL17 family. Part of the 50S ribosomal subunit. Contacts protein L32.

This is Large ribosomal subunit protein bL17 from Pseudomonas syringae pv. tomato (strain ATCC BAA-871 / DC3000).